Consider the following 339-residue polypeptide: MKILNLGDWHLGVKADDEWIRGIQIDGIKQAIEYSKKNGITTWIQYGDIFDVRKAITHKTMEFAREIVQTLDDAGITLHTIVGNHDLHYKNVMHPNASTELLAKYPNVKVYDKPTTVDFDGCLIDLIPWMCEENTGEILEHIKTSSASFCVGHWELNGFYFYKGMKSHGLEPDFLKTYKEVWSGHFHTISEAANVRYIGTPWTLTAGDENDPRGFWMFDTETERTEFIPNNTTWHRRIHYPFKGKIDYKDFTNLSVRVIVTEVDKNLTKFESELEKVVHSLRVVSKIDNSVESDDSEEVEVQSLQTLMEEYINAIPDITDSDREALIQYANQLYVEATQ.

It to phage T5 protein D12 and to yeast RAD52. As to quaternary structure, consists of two subunits: gp46 and gp47.

Its function is as follows. Exonuclease that plays a role in viral genome replication, DNA recombination, and host DNA degradation. This chain is Exonuclease subunit 1 (47), found in Escherichia coli (Bacteriophage T4).